Consider the following 21-residue polypeptide: GLFGVLAKVAAHVVPAIAEHF.

Residue F21 is modified to Phenylalanine amide.

In terms of tissue distribution, expressed by the skin dorsal glands.

Its subcellular location is the secreted. In terms of biological role, maculatin-1.1 shows significant antibacterial activity against Gram-positive bacteria, less against Gram-negative bacteria. Maculatin-1.1.1 is inactive. This Ranoidea genimaculata (Brown-spotted tree frog) protein is Maculatin-1.1.